Here is a 641-residue protein sequence, read N- to C-terminus: 1-phosphatidylinositol 4,5-bisphosphate phosphodiesterase zeta-1 (641 aa).

The 36-residue stretch at 35-70 folds into the EF-hand domain; the sequence is CSYIHVKRIFKDNDRLKQGRITIEEFRAIYRILTHR. The region spanning 155–299 is the PI-PLC X-box domain; the sequence is QDMTHPLNDY…LKFKVLVKNK (145 aa). Catalysis depends on residues histidine 170 and histidine 215. Positions 382 to 498 constitute a PI-PLC Y-box domain; the sequence is LSDLVIYTKA…GYILKPHFLR (117 aa). The 125-residue stretch at 498 to 622 folds into the C2 domain; it reads RESESYFNPS…KGYRRVPLFS (125 aa).

Interacts via its C2 domain with PtdIns(3)P and, to a lesser extent, PtdIns(5)P in vitro. It depends on Ca(2+) as a cofactor.

It is found in the nucleus. The protein resides in the cytoplasm. Its subcellular location is the perinuclear region. The catalysed reaction is a 1,2-diacyl-sn-glycero-3-phospho-(1D-myo-inositol-4,5-bisphosphate) + H2O = 1D-myo-inositol 1,4,5-trisphosphate + a 1,2-diacyl-sn-glycerol + H(+). Its function is as follows. The production of the second messenger molecules diacylglycerol (DAG) and inositol 1,4,5-trisphosphate (IP3) is mediated by activated phosphatidylinositol-specific phospholipase C enzymes. In vitro, hydrolyzes PtdIns(4,5)P2 in a Ca(2+)-dependent manner. Triggers intracellular Ca(2+) oscillations in oocytes solely during M phase and is involved in inducing oocyte activation and initiating embryonic development up to the blastocyst stage. Is therefore a strong candidate for the egg-activating soluble sperm factor that is transferred from the sperm into the egg cytoplasm following gamete membrane fusion. May exert an inhibitory effect on phospholipase-C-coupled processes that depend on calcium ions and protein kinase C, including CFTR trafficking and function. The protein is 1-phosphatidylinositol 4,5-bisphosphate phosphodiesterase zeta-1 of Macaca fascicularis (Crab-eating macaque).